The primary structure comprises 309 residues: MAPPLSSKVYVDGVYIPAALIVIGTAIVKRDWVVYSVALALALGTWKFFQLKPKKVLDPTKFQEFELKEKTIISHNVAIYRIQLPSPSSILGLPIGQHISIGADIPQPDGSSKEVVRSYTPISGDEQPGYVDLLIKSYPTGNISKYMAGLSVGQSIRVRGPKGAFVYQPNMVRHFGMIAGGTGITPMLQVVRAIVRGRAAGDTTQVDLIFANVTKEDILLKEDLDALAAEDKGFRVHYVLDRPPEGWTGGVGFVTQDMITKWLPKPADDVKILLCGPPPMVSGLKKATEALGFKKARPVSKLEDQVFAF.

A helical membrane pass occupies residues 31-51 (DWVVYSVALALALGTWKFFQL). In terms of domain architecture, FAD-binding FR-type spans 60 to 168 (TKFQEFELKE…RGPKGAFVYQ (109 aa)). FAD contacts are provided by residues 148–163 (AGLS…GPKG) and 174–208 (HFGM…QVDL).

Belongs to the flavoprotein pyridine nucleotide cytochrome reductase family. As to quaternary structure, monomer. Component of the 2-(3-amino-3-carboxypropyl)histidine synthase complex composed of DPH1, DPH2, DPH3 and a NADH-dependent reductase, predominantly CBR1. FAD is required as a cofactor.

It is found in the mitochondrion outer membrane. It catalyses the reaction 2 Fe(III)-[cytochrome b5] + NADH = 2 Fe(II)-[cytochrome b5] + NAD(+) + H(+). The enzyme catalyses 2 Fe(3+)-[Dph3] + NADH = 2 Fe(2+)-[Dph3] + NAD(+) + H(+). It functions in the pathway protein modification; peptidyl-diphthamide biosynthesis. In terms of biological role, NADH-dependent reductase for DPH3 and cytochrome b5. Required for the first step of diphthamide biosynthesis, a post-translational modification of histidine which occurs in elongation factor 2. DPH1 and DPH2 transfer a 3-amino-3-carboxypropyl (ACP) group from S-adenosyl-L-methionine (SAM) to a histidine residue, the reaction is assisted by a reduction system comprising DPH3 and a NADH-dependent reductase, predominantly CBR1. By reducing DPH3, also involved in the formation of the tRNA wobble base modification mcm5s 2U (5-methoxycarbonylmethyl-2-thiouridine), mediated by the elongator complex. The cytochrome b5/NADH cytochrome b5 reductase electron transfer system supports the catalytic activity of several sterol biosynthetic enzymes. In Pyricularia oryzae (strain 70-15 / ATCC MYA-4617 / FGSC 8958) (Rice blast fungus), this protein is NADH-cytochrome b5 reductase 1 (CBR1).